A 511-amino-acid polypeptide reads, in one-letter code: GMP synthase [glutamine-hydrolyzing] (511 aa).

One can recognise a Glutamine amidotransferase type-1 domain in the interval 5–195 (PIVVLDFGSQ…AKHICGCEST (191 aa)). The active-site Nucleophile is the Cys-82. Catalysis depends on residues His-169 and Glu-171. The GMPS ATP-PPase domain occupies 196 to 386 (WNMGSFAKEQ…LGLPKSMISR (191 aa)). Residue 223–229 (SGGVDSS) coordinates ATP.

As to quaternary structure, homodimer.

The catalysed reaction is XMP + L-glutamine + ATP + H2O = GMP + L-glutamate + AMP + diphosphate + 2 H(+). It functions in the pathway purine metabolism; GMP biosynthesis; GMP from XMP (L-Gln route): step 1/1. Its function is as follows. Catalyzes the synthesis of GMP from XMP. The polypeptide is GMP synthase [glutamine-hydrolyzing] (Aliarcobacter butzleri (strain RM4018) (Arcobacter butzleri)).